The chain runs to 348 residues: Guanine nucleotide-binding protein alpha-13 subunit (348 aa).

The N-myristoyl glycine moiety is linked to residue Gly2. The S-palmitoyl cysteine moiety is linked to residue Cys3. The region spanning 34 to 348 (SHIRLLLLGS…VFKDIAKRKK (315 aa)) is the G-alpha domain. The interval 37 to 50 (RLLLLGSAESGKTT) is G1 motif. GTP is bound by residues 42–49 (GSAESGKT), 176–182 (IMAYVPT), 201–205 (DIGGQ), 270–273 (NEID), and Ala326. Residues 174 to 182 (DLIMAYVPT) form a G2 motif region. Residue Thr182 participates in Mg(2+) binding. A G3 motif region spans residues 197 to 206 (FQLFDIGGQK). The interval 266–273 (YLFLNEID) is G4 motif. A G5 motif region spans residues 324–329 (CIAIDT).

The protein belongs to the G-alpha family. G proteins are composed of 3 units; alpha, beta and gamma. The alpha chain contains the guanine nucleotide binding site.

Functionally, guanine nucleotide-binding proteins (G proteins) are involved as modulators or transducers in various transmembrane signaling systems. The polypeptide is Guanine nucleotide-binding protein alpha-13 subunit (gpa-13) (Caenorhabditis elegans).